Consider the following 660-residue polypeptide: V-type ATP synthase subunit I (660 aa).

Transmembrane regions (helical) follow at residues 312–332, 362–382, 453–473, 485–505, 520–540, 560–580, and 593–613; these read FFAF…GLLF, ILGL…GMSF, FIDN…LSLG, IGWI…LGTV, GQIG…LAMI, VLSY…GATF, and SIVI…GGVI.

The protein belongs to the V-ATPase 116 kDa subunit family.

The protein resides in the cell membrane. Functionally, produces ATP from ADP in the presence of a proton gradient across the membrane. This is V-type ATP synthase subunit I (atpI) from Chlamydia pneumoniae (Chlamydophila pneumoniae).